The sequence spans 221 residues: Protein-L-isoaspartate O-methyltransferase (221 aa).

Ser-64 is an active-site residue.

This sequence belongs to the methyltransferase superfamily. L-isoaspartyl/D-aspartyl protein methyltransferase family.

Its subcellular location is the cytoplasm. It carries out the reaction [protein]-L-isoaspartate + S-adenosyl-L-methionine = [protein]-L-isoaspartate alpha-methyl ester + S-adenosyl-L-homocysteine. Catalyzes the methyl esterification of L-isoaspartyl residues in peptides and proteins that result from spontaneous decomposition of normal L-aspartyl and L-asparaginyl residues. It plays a role in the repair and/or degradation of damaged proteins. The sequence is that of Protein-L-isoaspartate O-methyltransferase from Cytophaga hutchinsonii (strain ATCC 33406 / DSM 1761 / CIP 103989 / NBRC 15051 / NCIMB 9469 / D465).